We begin with the raw amino-acid sequence, 185 residues long: Elongation factor P (185 aa).

This sequence belongs to the elongation factor P family.

It is found in the cytoplasm. It functions in the pathway protein biosynthesis; polypeptide chain elongation. In terms of biological role, involved in peptide bond synthesis. Stimulates efficient translation and peptide-bond synthesis on native or reconstituted 70S ribosomes in vitro. Probably functions indirectly by altering the affinity of the ribosome for aminoacyl-tRNA, thus increasing their reactivity as acceptors for peptidyl transferase. The polypeptide is Elongation factor P (Bacillus cytotoxicus (strain DSM 22905 / CIP 110041 / 391-98 / NVH 391-98)).